We begin with the raw amino-acid sequence, 256 residues long: MRNSPVSPGPGYAPARGSERARRRGVARWLAYVGGVFAGAWLATQLYYAVQIAMWSVFDPGSSAFMRADAWRLSNAQPATTIRHRWVPYDQIARTLKRAVIASEDADFANNSGYEVDAILQAWEKNRARGRIVSGGSTITQQLARNLFLSGERSYIRKGQELIITWMLETLLDKERIFEIYLNSVEFGRGVYGAQAAAQYYYRIPASRLSAWQSARLAVMLPNPKYFDAHRGSPYLAQRAGVIARRMGAAELPASQ.

The helical transmembrane segment at 26 to 48 threads the bilayer; sequence VARWLAYVGGVFAGAWLATQLYY.

This sequence belongs to the glycosyltransferase 51 family.

Its subcellular location is the cell inner membrane. It catalyses the reaction [GlcNAc-(1-&gt;4)-Mur2Ac(oyl-L-Ala-gamma-D-Glu-L-Lys-D-Ala-D-Ala)](n)-di-trans,octa-cis-undecaprenyl diphosphate + beta-D-GlcNAc-(1-&gt;4)-Mur2Ac(oyl-L-Ala-gamma-D-Glu-L-Lys-D-Ala-D-Ala)-di-trans,octa-cis-undecaprenyl diphosphate = [GlcNAc-(1-&gt;4)-Mur2Ac(oyl-L-Ala-gamma-D-Glu-L-Lys-D-Ala-D-Ala)](n+1)-di-trans,octa-cis-undecaprenyl diphosphate + di-trans,octa-cis-undecaprenyl diphosphate + H(+). It functions in the pathway cell wall biogenesis; peptidoglycan biosynthesis. Functionally, peptidoglycan polymerase that catalyzes glycan chain elongation from lipid-linked precursors. This Burkholderia pseudomallei (strain K96243) protein is Biosynthetic peptidoglycan transglycosylase.